Reading from the N-terminus, the 325-residue chain is Foldase protein PrsA (325 aa).

The first 20 residues, 1-20 (MKLMNKIIVPVTASALLLGA), serve as a signal peptide directing secretion. C21 carries the N-palmitoyl cysteine lipid modification. Residue C21 is the site of S-diacylglycerol cysteine attachment. The PpiC domain occupies 139–245 (ENSKKTSHIL…YGYHIIKADK (107 aa)). Disordered regions lie at residues 159–200 (EGLS…SAKK) and 303–325 (PDKI…NSGS).

The protein belongs to the PrsA family.

Its subcellular location is the cell membrane. The catalysed reaction is [protein]-peptidylproline (omega=180) = [protein]-peptidylproline (omega=0). Its function is as follows. Plays a major role in protein secretion by helping the post-translocational extracellular folding of several secreted proteins. In Staphylococcus epidermidis (strain ATCC 35984 / DSM 28319 / BCRC 17069 / CCUG 31568 / BM 3577 / RP62A), this protein is Foldase protein PrsA.